We begin with the raw amino-acid sequence, 275 residues long: Large ribosomal subunit protein uL2 (275 aa).

The tract at residues 221-275 (RGTAMNPIDHPHGGGEGKNFGKHPVSPWGVQSKGKKTRKNKRTEKYILYNRKYKK) is disordered. Residues 253–262 (KGKKTRKNKR) show a composition bias toward basic residues.

It belongs to the universal ribosomal protein uL2 family. As to quaternary structure, part of the 50S ribosomal subunit. Forms a bridge to the 30S subunit in the 70S ribosome.

In terms of biological role, one of the primary rRNA binding proteins. Required for association of the 30S and 50S subunits to form the 70S ribosome, for tRNA binding and peptide bond formation. It has been suggested to have peptidyltransferase activity; this is somewhat controversial. Makes several contacts with the 16S rRNA in the 70S ribosome. The chain is Large ribosomal subunit protein uL2 from Wigglesworthia glossinidia brevipalpis.